Here is a 314-residue protein sequence, read N- to C-terminus: Ribosomal RNA small subunit methyltransferase H (314 aa).

Residues 58-60 (GGH), Asp76, Phe103, Asp119, and Gln126 each bind S-adenosyl-L-methionine.

Belongs to the methyltransferase superfamily. RsmH family.

The protein resides in the cytoplasm. The catalysed reaction is cytidine(1402) in 16S rRNA + S-adenosyl-L-methionine = N(4)-methylcytidine(1402) in 16S rRNA + S-adenosyl-L-homocysteine + H(+). Its function is as follows. Specifically methylates the N4 position of cytidine in position 1402 (C1402) of 16S rRNA. The protein is Ribosomal RNA small subunit methyltransferase H of Gloeobacter violaceus (strain ATCC 29082 / PCC 7421).